The sequence spans 93 residues: U12-lycotoxin-Ls1b (93 aa).

The N-terminal stretch at 1–18 (MKFAVILLFSLVVLAVAS) is a signal peptide. Residues 19–38 (ESVEEVRREIDIEDLPEQQR) constitute a propeptide that is removed on maturation.

The protein belongs to the neurotoxin 31 family. In terms of processing, contains 5 disulfide bonds. As to expression, expressed by the venom gland.

It is found in the secreted. The polypeptide is U12-lycotoxin-Ls1b (Lycosa singoriensis (Wolf spider)).